The sequence spans 346 residues: Tetraacyldisaccharide 4'-kinase (346 aa).

Thr-54 to Thr-61 is an ATP binding site.

Belongs to the LpxK family.

The catalysed reaction is a lipid A disaccharide + ATP = a lipid IVA + ADP + H(+). It participates in glycolipid biosynthesis; lipid IV(A) biosynthesis; lipid IV(A) from (3R)-3-hydroxytetradecanoyl-[acyl-carrier-protein] and UDP-N-acetyl-alpha-D-glucosamine: step 6/6. Transfers the gamma-phosphate of ATP to the 4'-position of a tetraacyldisaccharide 1-phosphate intermediate (termed DS-1-P) to form tetraacyldisaccharide 1,4'-bis-phosphate (lipid IVA). This is Tetraacyldisaccharide 4'-kinase from Sinorhizobium medicae (strain WSM419) (Ensifer medicae).